A 78-amino-acid polypeptide reads, in one-letter code: D-alanyl carrier protein (78 aa).

The region spanning 1–78 (MEFKEQVLDL…KIVEALEELR (78 aa)) is the Carrier domain. Ser36 is modified (O-(pantetheine 4'-phosphoryl)serine).

The protein belongs to the DltC family. In terms of processing, 4'-phosphopantetheine is transferred from CoA to a specific serine of apo-DCP.

Its subcellular location is the cytoplasm. The protein operates within cell wall biogenesis; lipoteichoic acid biosynthesis. Its function is as follows. Carrier protein involved in the D-alanylation of lipoteichoic acid (LTA). The loading of thioester-linked D-alanine onto DltC is catalyzed by D-alanine--D-alanyl carrier protein ligase DltA. The DltC-carried D-alanyl group is further transferred to cell membrane phosphatidylglycerol (PG) by forming an ester bond, probably catalyzed by DltD. D-alanylation of LTA plays an important role in modulating the properties of the cell wall in Gram-positive bacteria, influencing the net charge of the cell wall. This Staphylococcus haemolyticus (strain JCSC1435) protein is D-alanyl carrier protein.